The chain runs to 303 residues: Regulatory protein PocR (303 aa).

In terms of domain architecture, HTH araC/xylS-type spans 195 to 293 (KKALRYIDAH…QVTPQAYRQQ (99 aa)). 2 DNA-binding regions (H-T-H motif) span residues 212 to 233 (EDVASHVYLSPYYFSKLFKKYQ) and 260 to 283 (IASIARNLGFSQTSYFCKVFRQTY).

It functions in the pathway cofactor biosynthesis; adenosylcobalamin biosynthesis [regulation]. It participates in polyol metabolism; 1,2-propanediol degradation [regulation]. In terms of biological role, positive regulatory protein of pdu and cob operons. Positively autoregulates its own expression. The chain is Regulatory protein PocR (pocR) from Salmonella typhimurium (strain LT2 / SGSC1412 / ATCC 700720).